We begin with the raw amino-acid sequence, 468 residues long: UDP-N-acetylmuramate--L-alanine ligase (468 aa).

114 to 120 (GTHGKTT) is an ATP binding site.

The protein belongs to the MurCDEF family.

The protein resides in the cytoplasm. The catalysed reaction is UDP-N-acetyl-alpha-D-muramate + L-alanine + ATP = UDP-N-acetyl-alpha-D-muramoyl-L-alanine + ADP + phosphate + H(+). It functions in the pathway cell wall biogenesis; peptidoglycan biosynthesis. Functionally, cell wall formation. This chain is UDP-N-acetylmuramate--L-alanine ligase, found in Methylobacterium radiotolerans (strain ATCC 27329 / DSM 1819 / JCM 2831 / NBRC 15690 / NCIMB 10815 / 0-1).